The following is a 320-amino-acid chain: Cytochrome f (320 aa).

Residues 1–35 (MQIRNTFSSLKGEITRFISVSLMIYIITRASISNA) form the signal peptide. 4 residues coordinate heme: tyrosine 36, cysteine 56, cysteine 59, and histidine 60. Residues 286–306 (VQGLLFFLASVVLAQIFLVLK) form a helical membrane-spanning segment.

Belongs to the cytochrome f family. As to quaternary structure, the 4 large subunits of the cytochrome b6-f complex are cytochrome b6, subunit IV (17 kDa polypeptide, petD), cytochrome f and the Rieske protein, while the 4 small subunits are PetG, PetL, PetM and PetN. The complex functions as a dimer. It depends on heme as a cofactor.

It localises to the plastid. It is found in the chloroplast thylakoid membrane. Functionally, component of the cytochrome b6-f complex, which mediates electron transfer between photosystem II (PSII) and photosystem I (PSI), cyclic electron flow around PSI, and state transitions. The protein is Cytochrome f of Citrus sinensis (Sweet orange).